The chain runs to 776 residues: Reticulon-1 (776 aa).

Disordered stretches follow at residues Met1–Ser103, Ile136–Ile168, Glu204–Pro244, and Leu285–Pro580. Positions Glu204 to Asp240 are enriched in basic and acidic residues. Ser327 bears the Phosphoserine mark. Residues Pro328–Ser341 are compositionally biased toward low complexity. Residues Ser350, Ser352, and Ser487 each carry the phosphoserine modification. Positions Ala497–Pro511 are enriched in basic and acidic residues. The Reticulon domain occupies Ala589 to Glu776. 2 helical membrane-spanning segments follow: residues Ile603 to Val623 and Phe705 to Leu725.

In terms of assembly, interacts with NDRG1. Interacts with BACE1. Interacts with TMEM33. Post-translationally, phosphorylated.

It localises to the endoplasmic reticulum membrane. It is found in the golgi apparatus membrane. In terms of biological role, inhibits amyloid precursor protein processing, probably by blocking BACE1 activity. This is Reticulon-1 (RTN1) from Pan troglodytes (Chimpanzee).